The primary structure comprises 227 residues: GTPase ERas (227 aa).

A compositionally biased stretch (polar residues) spans 1 to 19; sequence MALPTKSSILDLSSGTPCT. The tract at residues 1–25 is disordered; the sequence is MALPTKSSILDLSSGTPCTRSPEES. 48 to 55 lines the GTP pocket; the sequence is GASGVGKS. The Effector region signature appears at 70-78; the sequence is HDPTIQDSY. GTP-binding positions include 95 to 99 and 151 to 154; these read DTSGQ and NKCD. Residues Cys220 and Cys222 are each lipidated (S-palmitoyl cysteine). Cys224 is subject to Cysteine methyl ester. A lipid anchor (S-farnesyl cysteine) is attached at Cys224. Residues 225 to 227 constitute a propeptide, removed in mature form; it reads SVA.

Belongs to the small GTPase superfamily. Ras family. Interacts with PIK3CD. In terms of tissue distribution, expressed in several undifferentiated mouse embryonic stem cell lines.

The protein localises to the cell membrane. The catalysed reaction is GTP + H2O = GDP + phosphate + H(+). With respect to regulation, alternates between an inactive form bound to GDP and an active form bound to GTP. Activated by a guanine nucleotide-exchange factor (GEF) and inactivated by a GTPase-activating protein (GAP). Its function is as follows. Ras proteins bind GDP/GTP and possess intrinsic GTPase activity. Plays an important role in the tumor-like growth properties of embryonic stem cells. The chain is GTPase ERas (Eras) from Mus musculus (Mouse).